A 261-amino-acid polypeptide reads, in one-letter code: tRNA pseudouridine synthase A (261 aa).

Catalysis depends on Asp51, which acts as the Nucleophile. Substrate is bound at residue Tyr109.

Belongs to the tRNA pseudouridine synthase TruA family. Homodimer.

The catalysed reaction is uridine(38/39/40) in tRNA = pseudouridine(38/39/40) in tRNA. Functionally, formation of pseudouridine at positions 38, 39 and 40 in the anticodon stem and loop of transfer RNAs. In Shewanella baltica (strain OS195), this protein is tRNA pseudouridine synthase A.